The sequence spans 148 residues: MPVLKQLGPAQPKKRPDRGALSISAPLGDFRHTLHVGRGGDAFGDTSFLSRHGGGPPPEPRAPPAGAPRSPPPPAVPQSAAPSPADPLLSFHLDLGPSMLDAVLGVMDAARPEAAAAKPDAEPRPGTQPPQARCRPNADLELNDVIGL.

2 disordered regions span residues 1–89 (MPVL…DPLL) and 111–148 (RPEA…VIGL). The CRIB domain occupies 23–37 (ISAPLGDFRHTLHVG). R38 carries the post-translational modification Omega-N-methylarginine. A compositionally biased stretch (pro residues) spans 55-76 (GPPPEPRAPPAGAPRSPPPPAV). Low complexity predominate over residues 77-87 (PQSAAPSPADP).

This sequence belongs to the BORG/CEP family. As to quaternary structure, interacts with CDC42, in a GTP-dependent manner, and with SEPT7.

It localises to the endomembrane system. It is found in the cytoplasm. The protein resides in the cytoskeleton. Functionally, probably involved in the organization of the actin cytoskeleton. May act downstream of CDC42 to induce actin filament assembly leading to cell shape changes. Induces pseudopodia formation in fibroblasts. Inhibits MAPK8 independently of CDC42 binding. Controls septin organization and this effect is negatively regulated by CDC42. This chain is Cdc42 effector protein 5 (CDC42EP5), found in Homo sapiens (Human).